We begin with the raw amino-acid sequence, 452 residues long: UDP-glycosyltransferase 76D1 (452 aa).

Residues serine 269, 329 to 331 (APQ), 346 to 354 (HGGWNSCLE), and 368 to 371 (SGDQ) contribute to the UDP-alpha-D-glucose site.

The protein belongs to the UDP-glycosyltransferase family.

Possesses low quercetin 7-O-glucosyltransferase activity in vitro. This is UDP-glycosyltransferase 76D1 (UGT76D1) from Arabidopsis thaliana (Mouse-ear cress).